Consider the following 680-residue polypeptide: Lipase 1 (680 aa).

A signal peptide spans 1–34 (MKSQNKYSIRKFSVGASSILIATLLFLSGGQAQA). Residues 35-290 (AEKQVNMGNS…AKAKDDQTNK (256 aa)) constitute a propeptide that is removed on maturation. The tract at residues 82–259 (KNLHNDKTIS…PTKDNDKKNG (178 aa)) is disordered. Residues 84–111 (LHNDKTISEENHRKTDDLNKDQLKDDKN) show a composition bias toward basic and acidic residues. Polar residues-rich tracts occupy residues 125 to 138 (KNNNANPSDVNQGL), 162 to 193 (SQDSNANNNLPSQSLTKEAPSLNKSDQTSQRE), and 204 to 223 (QPQQNNQANDKITNHNFNNE). The segment covering 224 to 234 (QEVKPQKDEKT) has biased composition (basic and acidic residues). Residues 235 to 246 (LSVSDLKNNQKS) show a composition bias toward polar residues. Catalysis depends on S408, which acts as the Nucleophile. Catalysis depends on D600, which acts as the Charge relay system. D638 serves as a coordination point for Ca(2+). Catalysis depends on H639, which acts as the Charge relay system. Residues D641, D646, and D649 each coordinate Ca(2+).

This sequence belongs to the AB hydrolase superfamily. Lipase family.

It localises to the secreted. It carries out the reaction a triacylglycerol + H2O = a diacylglycerol + a fatty acid + H(+). In Staphylococcus aureus (strain Mu50 / ATCC 700699), this protein is Lipase 1 (lip1).